Here is a 261-residue protein sequence, read N- to C-terminus: Acyl-[acyl-carrier-protein]--UDP-N-acetylglucosamine O-acyltransferase (261 aa).

The protein belongs to the transferase hexapeptide repeat family. LpxA subfamily. In terms of assembly, homotrimer.

Its subcellular location is the cytoplasm. The enzyme catalyses a (3R)-hydroxyacyl-[ACP] + UDP-N-acetyl-alpha-D-glucosamine = a UDP-3-O-[(3R)-3-hydroxyacyl]-N-acetyl-alpha-D-glucosamine + holo-[ACP]. The protein operates within glycolipid biosynthesis; lipid IV(A) biosynthesis; lipid IV(A) from (3R)-3-hydroxytetradecanoyl-[acyl-carrier-protein] and UDP-N-acetyl-alpha-D-glucosamine: step 1/6. Its function is as follows. Involved in the biosynthesis of lipid A, a phosphorylated glycolipid that anchors the lipopolysaccharide to the outer membrane of the cell. The polypeptide is Acyl-[acyl-carrier-protein]--UDP-N-acetylglucosamine O-acyltransferase (Aquifex aeolicus (strain VF5)).